Here is a 313-residue protein sequence, read N- to C-terminus: 2,3-dihydroxyphenylpropionate/2,3-dihydroxicinnamic acid 1,2-dioxygenase (313 aa).

H116 (proton donor) is an active-site residue. The Proton acceptor role is filled by H180.

This sequence belongs to the LigB/MhpB extradiol dioxygenase family. As to quaternary structure, homotetramer. Requires Fe(2+) as cofactor.

The enzyme catalyses 3-(2,3-dihydroxyphenyl)propanoate + O2 = (2Z,4E)-2-hydroxy-6-oxonona-2,4-dienedioate + H(+). It catalyses the reaction (2E)-3-(2,3-dihydroxyphenyl)prop-2-enoate + O2 = (2Z,4E,7E)-2-hydroxy-6-oxonona-2,4,7-trienedioate + H(+). The protein operates within aromatic compound metabolism; 3-phenylpropanoate degradation. Functionally, catalyzes the non-heme iron(II)-dependent oxidative cleavage of 2,3-dihydroxyphenylpropionic acid and 2,3-dihydroxicinnamic acid into 2-hydroxy-6-ketononadienedioate and 2-hydroxy-6-ketononatrienedioate, respectively. In Mycobacterium sp. (strain MCS), this protein is 2,3-dihydroxyphenylpropionate/2,3-dihydroxicinnamic acid 1,2-dioxygenase.